A 311-amino-acid polypeptide reads, in one-letter code: Phospho-N-acetylmuramoyl-pentapeptide-transferase (311 aa).

Transmembrane regions (helical) follow at residues 2 to 22, 48 to 68, 74 to 94, 104 to 124, 144 to 164, 168 to 188, 192 to 212, 214 to 234, 237 to 257, and 288 to 308; these read ENNVIVFFLSFLSSVVFIEGF, GTPTAAGLVFIPIFIAVLLNF, SFLIAFSALSYGLIGAIDDFM, ITAVQKLFMQFTAAFIIVYFI, LGWFYYLLSSVVIVGVSNAVN, GVDGLAGFVFIGSIVPLLIVG, VVYLSLIGLLMGFLWHNWHPA, IFMGDAGSLALGGILATSFAL, LELFLIFFGFIFLLETLSVII, and KIAFRFSTLALLVSLLGIIGW.

Belongs to the glycosyltransferase 4 family. MraY subfamily. Mg(2+) is required as a cofactor.

It localises to the cell inner membrane. It carries out the reaction UDP-N-acetyl-alpha-D-muramoyl-L-alanyl-gamma-D-glutamyl-meso-2,6-diaminopimeloyl-D-alanyl-D-alanine + di-trans,octa-cis-undecaprenyl phosphate = di-trans,octa-cis-undecaprenyl diphospho-N-acetyl-alpha-D-muramoyl-L-alanyl-D-glutamyl-meso-2,6-diaminopimeloyl-D-alanyl-D-alanine + UMP. Its pathway is cell wall biogenesis; peptidoglycan biosynthesis. Catalyzes the initial step of the lipid cycle reactions in the biosynthesis of the cell wall peptidoglycan: transfers peptidoglycan precursor phospho-MurNAc-pentapeptide from UDP-MurNAc-pentapeptide onto the lipid carrier undecaprenyl phosphate, yielding undecaprenyl-pyrophosphoryl-MurNAc-pentapeptide, known as lipid I. This chain is Phospho-N-acetylmuramoyl-pentapeptide-transferase, found in Kosmotoga olearia (strain ATCC BAA-1733 / DSM 21960 / TBF 19.5.1).